The chain runs to 390 residues: S-adenosylmethionine synthase 3 (390 aa).

Residue Glu9 coordinates Mg(2+). His15 contacts ATP. Residue Glu43 coordinates K(+). L-methionine contacts are provided by Glu56 and Gln99. ATP contacts are provided by residues 167 to 169, 235 to 238, Asp246, 252 to 253, Ala269, Lys273, and Lys277; these read DGK, SGRF, and RK. Residue Asp246 coordinates L-methionine. Lys277 lines the L-methionine pocket.

This sequence belongs to the AdoMet synthase family. In terms of assembly, homotetramer. Interacts with GRF3. It depends on Mn(2+) as a cofactor. Mg(2+) serves as cofactor. Co(2+) is required as a cofactor. Requires K(+) as cofactor.

It is found in the cytoplasm. The catalysed reaction is L-methionine + ATP + H2O = S-adenosyl-L-methionine + phosphate + diphosphate. It functions in the pathway amino-acid biosynthesis; S-adenosyl-L-methionine biosynthesis; S-adenosyl-L-methionine from L-methionine: step 1/1. With respect to regulation, inhibited by 5,5'-dithiobis-2-nitrobenzoic acid (DTNB) and N-ethylmaleimide (NEM) (in vitro). Catalyzes the formation of S-adenosylmethionine from methionine and ATP. The reaction comprises two steps that are both catalyzed by the same enzyme: formation of S-adenosylmethionine (AdoMet) and triphosphate, and subsequent hydrolysis of the triphosphate. Involved in the biosynthesis of lignin. In Arabidopsis thaliana (Mouse-ear cress), this protein is S-adenosylmethionine synthase 3 (METK3).